A 346-amino-acid chain; its full sequence is GTP-binding RHO-like protein (346 aa).

Residues 1 to 10 (MTPNGSRRHS) show a composition bias toward basic residues. Residues 1–25 (MTPNGSRRHSAYMGSPRSQHSSTME) form a disordered region. Polar residues predominate over residues 16–25 (PRSQHSSTME). 82–89 (GDGGCGKT) is a binding site for GTP. Positions 104 to 112 (YVPTVFENY) match the Effector region motif. Residues 130–134 (DTAGQ) and 188–191 (TKSD) each bind GTP. Residues 259–294 (LGGSNGGSGNHSRHHSRNYSNVSNNRRGHLKNTSYD) are disordered. Residue Cys-343 is modified to Cysteine methyl ester. Cys-343 carries S-geranylgeranyl cysteine lipidation. Positions 344–346 (VIL) are cleaved as a propeptide — removed in mature form.

Belongs to the small GTPase superfamily. Rho family.

Its subcellular location is the cell membrane. The sequence is that of GTP-binding RHO-like protein (CRL1) from Candida albicans (strain WO-1) (Yeast).